Here is a 179-residue protein sequence, read N- to C-terminus: Large ribosomal subunit protein uL5 (179 aa).

It belongs to the universal ribosomal protein uL5 family. Part of the 50S ribosomal subunit; part of the 5S rRNA/L5/L18/L25 subcomplex. Contacts the 5S rRNA and the P site tRNA. Forms a bridge to the 30S subunit in the 70S ribosome.

This is one of the proteins that bind and probably mediate the attachment of the 5S RNA into the large ribosomal subunit, where it forms part of the central protuberance. In the 70S ribosome it contacts protein S13 of the 30S subunit (bridge B1b), connecting the 2 subunits; this bridge is implicated in subunit movement. Contacts the P site tRNA; the 5S rRNA and some of its associated proteins might help stabilize positioning of ribosome-bound tRNAs. The chain is Large ribosomal subunit protein uL5 from Citrifermentans bemidjiense (strain ATCC BAA-1014 / DSM 16622 / JCM 12645 / Bem) (Geobacter bemidjiensis).